A 279-amino-acid polypeptide reads, in one-letter code: Phosphate import ATP-binding protein PstB 2 (279 aa).

Residues 34-274 (FDIENLDLYY…PSDDRTRGYV (241 aa)) form the ABC transporter domain. 66–73 (GPSGCGKS) is a binding site for ATP.

This sequence belongs to the ABC transporter superfamily. Phosphate importer (TC 3.A.1.7) family. As to quaternary structure, the complex is composed of two ATP-binding proteins (PstB), two transmembrane proteins (PstC and PstA) and a solute-binding protein (PstS).

It localises to the cell inner membrane. The catalysed reaction is phosphate(out) + ATP + H2O = ADP + 2 phosphate(in) + H(+). Functionally, part of the ABC transporter complex PstSACB involved in phosphate import. Responsible for energy coupling to the transport system. The sequence is that of Phosphate import ATP-binding protein PstB 2 from Vibrio vulnificus (strain YJ016).